Here is a 267-residue protein sequence, read N- to C-terminus: Phosphatidylglycerol--prolipoprotein diacylglyceryl transferase (267 aa).

Transmembrane regions (helical) follow at residues 21–41 (VSLH…YWLG), 60–80 (LLFN…VFFY), and 95–115 (IWEG…AMLW). Arg-143 is a binding site for a 1,2-diacyl-sn-glycero-3-phospho-(1'-sn-glycerol). The next 2 membrane-spanning stretches (helical) occupy residues 203 to 223 (GSVA…VEYF) and 240 to 260 (GQLL…VAYY).

The protein belongs to the Lgt family.

The protein resides in the cell inner membrane. The catalysed reaction is L-cysteinyl-[prolipoprotein] + a 1,2-diacyl-sn-glycero-3-phospho-(1'-sn-glycerol) = an S-1,2-diacyl-sn-glyceryl-L-cysteinyl-[prolipoprotein] + sn-glycerol 1-phosphate + H(+). It functions in the pathway protein modification; lipoprotein biosynthesis (diacylglyceryl transfer). Functionally, catalyzes the transfer of the diacylglyceryl group from phosphatidylglycerol to the sulfhydryl group of the N-terminal cysteine of a prolipoprotein, the first step in the formation of mature lipoproteins. The polypeptide is Phosphatidylglycerol--prolipoprotein diacylglyceryl transferase (Glaesserella parasuis serovar 5 (strain SH0165) (Haemophilus parasuis)).